A 213-amino-acid polypeptide reads, in one-letter code: Putative 3-methyladenine DNA glycosylase (213 aa).

Belongs to the DNA glycosylase MPG family.

This is Putative 3-methyladenine DNA glycosylase from Leifsonia xyli subsp. xyli (strain CTCB07).